Consider the following 354-residue polypeptide: MKVLGIESSCDETGVAVYDTALSGVPALRAHAVYSQIALHAEYGGVVPELASRDHVRKLLPLIRQTLDEAGLRIDELDGVAYTAGPGLVGALLVGAGVARALAWALEVPAIGVHHMEGHLLAPLMEDDPPQPPFVALLVSGGHTQLVSVKALGAYEVLGETLDDAAGEAFDKTAKMMGLPYPGGPQLAALAETGTPGRYKFARPMTDRPGLDFSFSGLKTQVLLAWRGSDQSDTTRADIARGFEDAVVETLAIKCLRALDTADCNTLVVAGGVGANKRLRARLQEAAQRRGGRVCFPRPALCTDNGAMIAFAGALRLEAGEHADAAVQVTPRWDMASLPPLAAARESGIGNRES.

Fe cation-binding residues include His115 and His119. Substrate contacts are provided by residues 138–142 (LVSGG), Asp171, Gly184, and Asn276. Residue Asp304 participates in Fe cation binding.

Belongs to the KAE1 / TsaD family. The cofactor is Fe(2+).

The protein resides in the cytoplasm. It carries out the reaction L-threonylcarbamoyladenylate + adenosine(37) in tRNA = N(6)-L-threonylcarbamoyladenosine(37) in tRNA + AMP + H(+). Functionally, required for the formation of a threonylcarbamoyl group on adenosine at position 37 (t(6)A37) in tRNAs that read codons beginning with adenine. Is involved in the transfer of the threonylcarbamoyl moiety of threonylcarbamoyl-AMP (TC-AMP) to the N6 group of A37, together with TsaE and TsaB. TsaD likely plays a direct catalytic role in this reaction. The protein is tRNA N6-adenosine threonylcarbamoyltransferase of Xanthomonas campestris pv. campestris (strain 8004).